The chain runs to 173 residues: Bifunctional protein PyrR (173 aa).

A PRPP-binding motif is present at residues 93–105; the sequence is VILVDDVLYTGRT.

Belongs to the purine/pyrimidine phosphoribosyltransferase family. PyrR subfamily. In terms of assembly, homodimer and homohexamer; in equilibrium.

It catalyses the reaction UMP + diphosphate = 5-phospho-alpha-D-ribose 1-diphosphate + uracil. Functionally, regulates transcriptional attenuation of the pyrimidine nucleotide (pyr) operon by binding in a uridine-dependent manner to specific sites on pyr mRNA. This disrupts an antiterminator hairpin in the RNA and favors formation of a downstream transcription terminator, leading to a reduced expression of downstream genes. In terms of biological role, also displays a weak uracil phosphoribosyltransferase activity which is not physiologically significant. In Streptococcus thermophilus (strain ATCC BAA-491 / LMD-9), this protein is Bifunctional protein PyrR.